Reading from the N-terminus, the 142-residue chain is Large ribosomal subunit protein uL16 (142 aa).

The protein belongs to the universal ribosomal protein uL16 family. Part of the 50S ribosomal subunit.

Its function is as follows. Binds 23S rRNA and is also seen to make contacts with the A and possibly P site tRNAs. In Aquifex aeolicus (strain VF5), this protein is Large ribosomal subunit protein uL16.